We begin with the raw amino-acid sequence, 544 residues long: MSSVQSSQTQKNDDAEVFDALIVGAGFNGIYQLHRLRQEGFKVRLFEAGADMGGIWYWNCYPGARVDSHIPIYEFSIEELWRDWNWTERFPAWDELRRYFHYVDKKLDLSRDIRFGMRVSAAEFDEARDQWVIRTTDGTVVRARFFILCTGFASKPYIPNYKGLESFAGESFHTGLWPQEGASFTGKRVGVVGTGASGVQVVQEASKDAAHLTVFQRTPILALPMQQRKLDVETQQRMKADYPEIFRIRRETFGGFDILRDERSALEVPPEERCALYEKLWQKGGFHYWIGGFSDILTNEEANRTMYDFWRDKTRARIKNPALADKLAPMEPPHPFGVKRPSLEQWYYEAFNQDNVSLVDVREMPIVEIVPEGVLTSDGLVELDMLVLATGFDAVTGGLTQIDIHGTGGITLKEKWTEGARTYLGFATSGFPNMLFLYGPQSPSGFCNGPTCAEMQGEWVVDCLKHMRENNKGRIEATAQAEEEWAQLLNSIAGMTLFPRADSWYMGANIPGKPRQLLNFPGVPIYMDQCNTAAAKDYEGFVLD.

Residues phenylalanine 27, glutamate 47, tryptophan 56, aspartate 67, tyrosine 73, and valine 119 each coordinate FAD.

It belongs to the FAD-binding monooxygenase family. FAD is required as a cofactor.

In terms of biological role, catalyzes a Baeyer-Villiger oxidation reaction, i.e. the insertion of an oxygen atom into a carbon-carbon bond adjacent to a carbonyl, which converts ketones to esters or lactones using NADPH as an electron donor. Besides cycloalkanones, can use cyclic alpha,beta-unsaturated ketones as substrates, leading to enol-lactones. Can also act on methylated cycloalkanones and methylated cycloalkenones with high enantioselectivity in some cases. The chain is Baeyer-Villiger monooxygenase from Parvibaculum lavamentivorans (strain DS-1 / DSM 13023 / NCIMB 13966).